The primary structure comprises 1411 residues: DNA-directed RNA polymerase subunit beta' (1411 aa).

Cys70, Cys72, Cys85, and Cys88 together coordinate Zn(2+). Residues Asp460, Asp462, and Asp464 each contribute to the Mg(2+) site. 4 residues coordinate Zn(2+): Cys814, Cys889, Cys896, and Cys899. The segment covering 1387 to 1399 (RSTSSGTEITSPS) has biased composition (polar residues). Residues 1387 to 1411 (RSTSSGTEITSPSKDAIPLGSKVGF) are disordered.

Belongs to the RNA polymerase beta' chain family. The RNAP catalytic core consists of 2 alpha, 1 beta, 1 beta' and 1 omega subunit. When a sigma factor is associated with the core the holoenzyme is formed, which can initiate transcription. Requires Mg(2+) as cofactor. Zn(2+) serves as cofactor.

It catalyses the reaction RNA(n) + a ribonucleoside 5'-triphosphate = RNA(n+1) + diphosphate. Its function is as follows. DNA-dependent RNA polymerase catalyzes the transcription of DNA into RNA using the four ribonucleoside triphosphates as substrates. This is DNA-directed RNA polymerase subunit beta' from Xylella fastidiosa (strain M12).